The sequence spans 551 residues: Urocanate hydratase (551 aa).

Residues 48 to 49 (GG), Gln-126, 172 to 174 (GMG), Glu-192, Arg-197, 238 to 239 (NA), 259 to 263 (QTSAH), 269 to 270 (YI), and Tyr-318 each bind NAD(+). Cys-406 is an active-site residue. Gly-488 contributes to the NAD(+) binding site.

Belongs to the urocanase family. NAD(+) serves as cofactor.

Its subcellular location is the cytoplasm. The enzyme catalyses 4-imidazolone-5-propanoate = trans-urocanate + H2O. It participates in amino-acid degradation; L-histidine degradation into L-glutamate; N-formimidoyl-L-glutamate from L-histidine: step 2/3. Catalyzes the conversion of urocanate to 4-imidazolone-5-propionate. This chain is Urocanate hydratase, found in Geobacillus kaustophilus (strain HTA426).